The following is a 372-amino-acid chain: Spermidine/putrescine import ATP-binding protein PotA (372 aa).

The ABC transporter domain occupies 13 to 243 (IKLTGISKSF…PKNLFVARFI (231 aa)). 45–52 (GPSGCGKT) provides a ligand contact to ATP.

Belongs to the ABC transporter superfamily. Spermidine/putrescine importer (TC 3.A.1.11.1) family. The complex is composed of two ATP-binding proteins (PotA), two transmembrane proteins (PotB and PotC) and a solute-binding protein (PotD).

It is found in the cell inner membrane. It catalyses the reaction ATP + H2O + polyamine-[polyamine-binding protein]Side 1 = ADP + phosphate + polyamineSide 2 + [polyamine-binding protein]Side 1.. Part of the ABC transporter complex PotABCD involved in spermidine/putrescine import. Responsible for energy coupling to the transport system. The chain is Spermidine/putrescine import ATP-binding protein PotA from Aliivibrio fischeri (strain ATCC 700601 / ES114) (Vibrio fischeri).